A 1340-amino-acid polypeptide reads, in one-letter code: MDFQNDFLTNPLRVTLYNPAENEYTKTFIFLGSVPANVLQACRKDLQRTPKDKEILQNFYGKDWEKKLSQYVVGGDSDDLDEFEKLFVEDSGEETNVMMPEIETMYSEYSIFPEDTFKDIREKIYVATGIPPYRQHIFFFQNNALQVTYRLLLSGSGVALDIRDYKKEFQQVGGLNIDASMESQKDELYVEALDSFQLIKNIHHIFVADLNTLVAPMRRQISIAMEDNYQFDLLYYGLIMKYWPLLSPDAFKLLVQSPLQMEKQYPALSPSLTSLKKRLLLEQKLINFTYARAQQVIAKYEGNRLTRGTLAVTSAMIKISPLVNIQINVRNVFDLFPATPDIPQLVVFFYSKTGPTVVSKHHITSTEPEKFSNKTFRVPTIILIRFINKKAFILTIQNNGHYFIESNWSENERHDFNSVVSTLNNFINPIIHTINDMGPAAFPRGGSLPLPSNEDIQISISSMSVSTFWPYTLSSKGFTELKSRWREYEQAGIISVRGLQQTGIYNFLFKKGIYSYDPHEIERMIIISSGPGRKMDINVALLQNTYAYLFDANVAARWETIYGGRNIRIYHRVTDIKIEMFNITQEEFNYLWVYLFVFLDNLITGPDKILVNKLSQLHDKQQGKGASQLRALQEQDPDLYDLRKYDTQATVYSVLCQHPRPPVIYSEAEVKSMPPAKRKELVKYWNFTEGVPAYYSCPHPDYPHLSLLEGRHPLNYCLPCCQKTKALLGTKRFYINNTCLTKHTFVEQDLEDLNTQTSRHTLSYGKKIPVNRIAFLPHQIADELFLNTIKEPDIFCIVGVEQTMLGISNAGLFYSLARILDLAPKALAIEIAKAANTPQYYILGNGAGNMFSSGAELANLILQTFVEQKNQLLQWDTTWQDIFLDLVAICYDLHCVFFKDKQGDIEFEVSPSTIQKILSPSKKIAIIFDTDEGIYPMAITQQKRFLKNSEAQYIFTEDDPVMEVVQSMSEFMCKDNWWDIHDVKNIPGYTVGKKLINRHNFCYALLIDSDTDRPIYFPIRLSSYIHDDIPIDFDLRPTQIASFEETWKFITLFNKQYKQYEIVPSAVLQNIKKEFVGFLSEGKTGLYFYYAPTQTLPATLEKLPIATLTIDPRDIDQAILYPLEEPYPQQNKANKAFYINHLYKFLLIEFFDVLYGLQSNSTRKHIENLFQKTDFQKITSVTEFYTKLSDFVDLNDIHTIKHILETTDAEHALKVLQKNIFNFDYTLLSPLQSYTYDELCQHLKKLLTPRIEFYEDIETIDRGLINIYTSCQYSTLNQPQCKKKRLRIPVNHFENYIHILAADILNPLKHSTLLLTGLGVIDDLQFILRPQEIISVKNKF.

Belongs to the asfivirus G1340L family.

The protein localises to the virion. In terms of biological role, putative initation factor. This chain is Early transcription factor large subunit homolog, found in African swine fever virus (strain Badajoz 1971 Vero-adapted) (Ba71V).